The chain runs to 644 residues: Macrolide export ATP-binding/permease protein MacB (644 aa).

One can recognise an ABC transporter domain in the interval 4–242; that stretch reads IECKNINRYF…SNVGRIQEKA (239 aa). Residue 40 to 47 coordinates ATP; sequence GQSGSGKS. A run of 4 helical transmembrane segments spans residues 270-290, 524-544, 574-594, and 607-627; these read LLTM…VALG, IALI…LVSV, LICI…SLVF, and AASV…FGFM.

This sequence belongs to the ABC transporter superfamily. Macrolide exporter (TC 3.A.1.122) family. As to quaternary structure, homodimer.

It localises to the cell inner membrane. Its function is as follows. Non-canonical ABC transporter that contains transmembrane domains (TMD), which form a pore in the inner membrane, and an ATP-binding domain (NBD), which is responsible for energy generation. Overexpression confers resistance against macrolides. The polypeptide is Macrolide export ATP-binding/permease protein MacB (Neisseria gonorrhoeae).